Consider the following 385-residue polypeptide: Putative actin-25 (385 aa).

It belongs to the actin family.

The protein localises to the cytoplasm. The protein resides in the cytoskeleton. The catalysed reaction is ATP + H2O = ADP + phosphate + H(+). Actins are highly conserved proteins that are involved in various types of cell motility and are ubiquitously expressed in all eukaryotic cells. Multiple isoforms are involved in various cellular functions such as cytoskeleton structure, cell mobility, chromosome movement and muscle contraction. The protein is Putative actin-25 (act25) of Dictyostelium discoideum (Social amoeba).